Here is a 341-residue protein sequence, read N- to C-terminus: tRNA N6-adenosine threonylcarbamoyltransferase (341 aa).

Fe cation-binding residues include histidine 111 and histidine 115. Substrate is bound by residues leucine 134–glycine 138, aspartate 167, glycine 180, and asparagine 272. Aspartate 300 lines the Fe cation pocket.

Belongs to the KAE1 / TsaD family. The cofactor is Fe(2+).

The protein resides in the cytoplasm. It catalyses the reaction L-threonylcarbamoyladenylate + adenosine(37) in tRNA = N(6)-L-threonylcarbamoyladenosine(37) in tRNA + AMP + H(+). Required for the formation of a threonylcarbamoyl group on adenosine at position 37 (t(6)A37) in tRNAs that read codons beginning with adenine. Is involved in the transfer of the threonylcarbamoyl moiety of threonylcarbamoyl-AMP (TC-AMP) to the N6 group of A37, together with TsaE and TsaB. TsaD likely plays a direct catalytic role in this reaction. In Edwardsiella ictaluri (strain 93-146), this protein is tRNA N6-adenosine threonylcarbamoyltransferase.